The chain runs to 200 residues: MIVLGLTGSIGMGKTTAAGMFAEAGVPVYSADDAVHRLYSGRAAPLIEATFPGTVENGIVNREKLFKAVIGQPEAIKKLEAVVHPLVREEEDAFRREAEKSGAAIALVDIPLLFETGAEKRVDKVVVVSAPADIQHTRVLARPGMTQEKLKAILLRQIPDAEKRSRADFVLDTSGSFDDLRRQIAEIITGLSGKPAAATR.

A DPCK domain is found at 3 to 200 (VLGLTGSIGM…LSGKPAAATR (198 aa)). ATP is bound at residue 11–16 (GMGKTT).

It belongs to the CoaE family.

It localises to the cytoplasm. The catalysed reaction is 3'-dephospho-CoA + ATP = ADP + CoA + H(+). Its pathway is cofactor biosynthesis; coenzyme A biosynthesis; CoA from (R)-pantothenate: step 5/5. Functionally, catalyzes the phosphorylation of the 3'-hydroxyl group of dephosphocoenzyme A to form coenzyme A. This is Dephospho-CoA kinase from Brucella abortus (strain 2308).